Reading from the N-terminus, the 454-residue chain is Bifunctional protein GlmU (454 aa).

Residues 1-232 are pyrophosphorylase; that stretch reads MTDRTCLSIV…VDNVIGINNR (232 aa). UDP-N-acetyl-alpha-D-glucosamine-binding positions include 11-14, Lys-25, Gln-78, and 83-84; these read LAAG and GT. Position 108 (Asp-108) interacts with Mg(2+). UDP-N-acetyl-alpha-D-glucosamine-binding residues include Gly-144, Glu-158, Asn-173, and Asn-230. Mg(2+) is bound at residue Asn-230. A linker region spans residues 233–253; the sequence is AELAEAETIWQNRKRRELMLS. The segment at 254-454 is N-acetyltransferase; the sequence is GVTLIAPETV…AIKAAKSVSK (201 aa). Positions 319 and 337 each coordinate UDP-N-acetyl-alpha-D-glucosamine. The active-site Proton acceptor is the His-349. UDP-N-acetyl-alpha-D-glucosamine-binding residues include Tyr-352 and Asn-363. Acetyl-CoA is bound by residues Ala-366, 372–373, Ser-391, Ser-409, and Arg-426; that span reads NY.

It in the N-terminal section; belongs to the N-acetylglucosamine-1-phosphate uridyltransferase family. This sequence in the C-terminal section; belongs to the transferase hexapeptide repeat family. As to quaternary structure, homotrimer. Mg(2+) serves as cofactor.

It is found in the cytoplasm. The catalysed reaction is alpha-D-glucosamine 1-phosphate + acetyl-CoA = N-acetyl-alpha-D-glucosamine 1-phosphate + CoA + H(+). It carries out the reaction N-acetyl-alpha-D-glucosamine 1-phosphate + UTP + H(+) = UDP-N-acetyl-alpha-D-glucosamine + diphosphate. Its pathway is nucleotide-sugar biosynthesis; UDP-N-acetyl-alpha-D-glucosamine biosynthesis; N-acetyl-alpha-D-glucosamine 1-phosphate from alpha-D-glucosamine 6-phosphate (route II): step 2/2. It functions in the pathway nucleotide-sugar biosynthesis; UDP-N-acetyl-alpha-D-glucosamine biosynthesis; UDP-N-acetyl-alpha-D-glucosamine from N-acetyl-alpha-D-glucosamine 1-phosphate: step 1/1. The protein operates within bacterial outer membrane biogenesis; LPS lipid A biosynthesis. Its function is as follows. Catalyzes the last two sequential reactions in the de novo biosynthetic pathway for UDP-N-acetylglucosamine (UDP-GlcNAc). The C-terminal domain catalyzes the transfer of acetyl group from acetyl coenzyme A to glucosamine-1-phosphate (GlcN-1-P) to produce N-acetylglucosamine-1-phosphate (GlcNAc-1-P), which is converted into UDP-GlcNAc by the transfer of uridine 5-monophosphate (from uridine 5-triphosphate), a reaction catalyzed by the N-terminal domain. The protein is Bifunctional protein GlmU of Brucella abortus (strain S19).